The following is a 66-amino-acid chain: Beta-mammal toxin Cv3 (66 aa).

In terms of domain architecture, LCN-type CS-alpha/beta spans 1–66 (KEGYIVNYYD…VWPLPNKTCN (66 aa)). 4 cysteine pairs are disulfide-bonded: C12/C65, C16/C41, C25/C46, and C29/C48.

In terms of tissue distribution, expressed by the venom gland.

It localises to the secreted. Functionally, beta toxins bind voltage-independently at site-4 of sodium channels (Nav) and reduces peak current and shifts the voltage of activation toward more negative potentials thereby affecting sodium channel activation and promoting spontaneous and repetitive firing. This toxin is strongly toxic to mice. The protein is Beta-mammal toxin Cv3 of Centruroides villegasi (Scorpion).